The chain runs to 334 residues: uncharacterized protein (334 aa).

It belongs to the MG414/MG415 family.

This is an uncharacterized protein from Mycoplasma pneumoniae (strain ATCC 29342 / M129 / Subtype 1) (Mycoplasmoides pneumoniae).